The chain runs to 229 residues: 5'-methylthioadenosine/S-adenosylhomocysteine nucleosidase (229 aa).

The active-site Proton acceptor is glutamate 12. Substrate contacts are provided by residues glycine 78, isoleucine 152, and 173–174 (ME). Aspartate 197 acts as the Proton donor in catalysis.

It belongs to the PNP/UDP phosphorylase family. MtnN subfamily.

It catalyses the reaction S-adenosyl-L-homocysteine + H2O = S-(5-deoxy-D-ribos-5-yl)-L-homocysteine + adenine. The enzyme catalyses S-methyl-5'-thioadenosine + H2O = 5-(methylsulfanyl)-D-ribose + adenine. The catalysed reaction is 5'-deoxyadenosine + H2O = 5-deoxy-D-ribose + adenine. It participates in amino-acid biosynthesis; L-methionine biosynthesis via salvage pathway; S-methyl-5-thio-alpha-D-ribose 1-phosphate from S-methyl-5'-thioadenosine (hydrolase route): step 1/2. In terms of biological role, catalyzes the irreversible cleavage of the glycosidic bond in both 5'-methylthioadenosine (MTA) and S-adenosylhomocysteine (SAH/AdoHcy) to adenine and the corresponding thioribose, 5'-methylthioribose and S-ribosylhomocysteine, respectively. Also cleaves 5'-deoxyadenosine, a toxic by-product of radical S-adenosylmethionine (SAM) enzymes, into 5-deoxyribose and adenine. The protein is 5'-methylthioadenosine/S-adenosylhomocysteine nucleosidase of Pasteurella multocida (strain Pm70).